Here is a 147-residue protein sequence, read N- to C-terminus: 3-dehydroquinate dehydratase (147 aa).

Catalysis depends on tyrosine 23, which acts as the Proton acceptor. Residues asparagine 75, histidine 81, and aspartate 88 each coordinate substrate. Histidine 101 (proton donor) is an active-site residue. Substrate contacts are provided by residues 102 to 103 (LS) and arginine 112.

This sequence belongs to the type-II 3-dehydroquinase family. In terms of assembly, homododecamer.

The catalysed reaction is 3-dehydroquinate = 3-dehydroshikimate + H2O. The protein operates within metabolic intermediate biosynthesis; chorismate biosynthesis; chorismate from D-erythrose 4-phosphate and phosphoenolpyruvate: step 3/7. Catalyzes a trans-dehydration via an enolate intermediate. The chain is 3-dehydroquinate dehydratase from Stenotrophomonas maltophilia (strain K279a).